The chain runs to 1400 residues: Bromodomain-containing protein 4 (1400 aa).

Residues 1–58 are disordered; sequence MSTESGPGTRLRNLPVMGDGLETSQMSTTQAQAQPQPANAASTNPPPPETSNPNKPKR. The segment covering 23–43 has biased composition (low complexity); it reads TSQMSTTQAQAQPQPANAAST. Positions 58–164 constitute a Bromo 1 domain; the sequence is RQTNQLQYLL…KLFLQKINEL (107 aa). A Glycyl lysine isopeptide (Lys-Gly) (interchain with G-Cter in SUMO2) cross-link involves residue lysine 99. 2 disordered regions span residues 176–353 and 461–616; these read AKGR…KISE and EPEE…YEEK. Residues 197–212 show a composition bias toward low complexity; sequence PNTTQASTSPQTQTPQ. The segment covering 244–267 has biased composition (pro residues); that stretch reads PPQPLQTPSPVPPQPPPPPAPVPQ. Residues 321–337 are compositionally biased toward basic and acidic residues; that stretch reads PRRESSRPVKPPKKDVP. One can recognise a Bromo 2 domain in the interval 349-458; the sequence is SKISEQLKCC…DVFEMRFAKM (110 aa). The residue at position 471 (serine 471) is a Phosphoserine. Residues 479–498 show a composition bias toward low complexity; that stretch reads KVVAPPSSSDSSSDSSSDSD. Phosphoserine; by CK2 occurs at positions 485, 489, and 493. The NPS region stretch occupies residues 485 to 504; that stretch reads SSSDSSSDSSSDSDSSTDDS. Serine 495 is subject to Phosphoserine. Serine 499, serine 500, and serine 504 each carry phosphoserine; by CK2. The tract at residues 525-580 is BID region; the sequence is QLAALSQPQQNKPKKKEKDKKEKKKEKHKKKEEVEENKKSKTKELPPKKTKKNNSS. The span at 536-554 shows a compositional bias: basic residues; that stretch reads KPKKKEKDKKEKKKEKHKK. Positions 555-571 are enriched in basic and acidic residues; that stretch reads KEEVEENKKSKTKELPP. Lysine 586 participates in a covalent cross-link: Glycyl lysine isopeptide (Lys-Gly) (interchain with G-Cter in SUMO2). One can recognise an NET domain in the interval 601–683; that stretch reads ESEEEDKCKP…SCLRKKRKPQ (83 aa). Phosphoserine is present on serine 602. Over residues 606-616 the composition is skewed to basic and acidic residues; that stretch reads DKCKPMSYEEK. Residues lysine 646 and lysine 695 each participate in a glycyl lysine isopeptide (Lys-Gly) (interchain with G-Cter in SUMO2) cross-link. Positions 675 to 1125 are disordered; that stretch reads CLRKKRKPQA…GCPPASPAAV (451 aa). Low complexity predominate over residues 700-713; it reads SSSESESTSESSSS. Basic residues predominate over residues 725–745; the sequence is KSKKKGHTGRDQKKHHHHHHP. Composition is skewed to pro residues over residues 748 to 787, 835 to 848, 883 to 892, and 900 to 909; these read QPAPAPVPQQPPPPPQQPPPPPPPQQQQQQPPPPPPPPSM, PELPPHLPQPPEHS, PPKPTRPPAV, and PLLPQPPMAQ. Residues 928 to 938 are compositionally biased toward low complexity; the sequence is MQMQLYLQQLQ. Pro residues-rich tracts occupy residues 955–966, 975–1000, and 1013–1037; these read QPPPPLPPPPHP, PQPPPPPPPQPQPPPQQQHQPPPRPV, and QPPPPPGQQPTHPPPGQQPPPPQPA. The tract at residues 1050 to 1400 is C-terminal (CTD) region; the sequence is RHHKSDPYSA…LLSIFEENLF (351 aa). Lysine 1053 is covalently cross-linked (Glycyl lysine isopeptide (Lys-Gly) (interchain with G-Cter in SUMO2)). The segment covering 1075-1084 has biased composition (polar residues); that stretch reads QMPQFQSLTH. Residues 1085-1095 are compositionally biased toward low complexity; sequence QSPPQQNVQPK. Position 1147 is an N6-acetyllysine; alternate (lysine 1147). Residue lysine 1147 forms a Glycyl lysine isopeptide (Lys-Gly) (interchain with G-Cter in SUMO1); alternate linkage. Lysine 1147 participates in a covalent cross-link: Glycyl lysine isopeptide (Lys-Gly) (interchain with G-Cter in SUMO2); alternate. Phosphoserine is present on residues serine 1153 and serine 1162. The interval 1155-1377 is disordered; it reads IIRSEPFSTS…KREQERRRRE (223 aa). Positions 1211-1232 are enriched in basic and acidic residues; that stretch reads PDKDKQKQEPKTPVAPKKDLKI. A Glycyl lysine isopeptide (Lys-Gly) (interchain with G-Cter in SUMO2) cross-link involves residue lysine 1233. 2 positions are modified to phosphoserine: serine 1237 and serine 1240. Residues 1247-1258 are compositionally biased toward low complexity; that stretch reads TTPSSTAKSSSD. The span at 1259–1320 shows a compositional bias: basic and acidic residues; sequence SFEHFRRAAR…AHEEARRRQE (62 aa). A compositionally biased stretch (low complexity) spans 1321-1357; that stretch reads QQQQQQQQRQEQQQQQQQAAAVAAASAPQAQSSQPQS. The span at 1361–1377 shows a compositional bias: basic and acidic residues; the sequence is QQRELARKREQERRRRE.

It belongs to the BET family. As to quaternary structure, binds acetylated histone H4. Interacts with p53/TP53; the interaction is direct. Interacts (via CTD region) with CDK9 and CCNT1, acting as an associated component of P-TEFb complex. Interacts with RELA (when acetylated at 'Lys-310'). Interacts (via NET domain) with NSD3, CHD4, BICRA and ATAD5. The interaction with BICRA bridges BRD4 to the GBAF complex. Interacts (via NET domain) with JMJD6 (via JmjC and N-terminal domains); the interaction is stronger in presence of ssRNA and recruits JMJD6 on distal enhancers. Interacts with NSD3. Interacts with NIPBL. Post-translationally, phosphorylation by CK2 disrupt the intramolecular binding between the bromo domain 2 and the NPS region and promotes binding between the NPS and the BID regions, leading to activate the protein and promote binding to acetylated histones. In absence of phosphorylation, BRD4 does not localize to p53/TP53 target gene promoters, phosphorylation promoting recruitment to p53/TP53 target promoters.

Its subcellular location is the nucleus. It is found in the chromosome. Its function is as follows. Chromatin reader protein that recognizes and binds acetylated histones and plays a key role in transmission of epigenetic memory across cell divisions and transcription regulation. Remains associated with acetylated chromatin throughout the entire cell cycle and provides epigenetic memory for postmitotic G1 gene transcription by preserving acetylated chromatin status and maintaining high-order chromatin structure. During interphase, plays a key role in regulating the transcription of signal-inducible genes by associating with the P-TEFb complex and recruiting it to promoters. Also recruits P-TEFb complex to distal enhancers, so called anti-pause enhancers in collaboration with JMJD6. BRD4 and JMJD6 are required to form the transcriptionally active P-TEFb complex by displacing negative regulators such as HEXIM1 and 7SKsnRNA complex from P-TEFb, thereby transforming it into an active form that can then phosphorylate the C-terminal domain (CTD) of RNA polymerase II. Regulates differentiation of naive CD4(+) T-cells into T-helper Th17 by promoting recruitment of P-TEFb to promoters. Promotes phosphorylation of 'Ser-2' of the C-terminal domain (CTD) of RNA polymerase II. According to a report, directly acts as an atypical protein kinase and mediates phosphorylation of 'Ser-2' of the C-terminal domain (CTD) of RNA polymerase II; these data however need additional evidences in vivo. In addition to acetylated histones, also recognizes and binds acetylated RELA, leading to further recruitment of the P-TEFb complex and subsequent activation of NF-kappa-B. Also acts as a regulator of p53/TP53-mediated transcription: following phosphorylation by CK2, recruited to p53/TP53 specific target promoters. The protein is Bromodomain-containing protein 4 (Brd4) of Mus musculus (Mouse).